The following is a 650-amino-acid chain: Threonine--tRNA ligase (650 aa).

A TGS domain is found at 1–66 (MVQITLPDGS…EHDAQLAIVT (66 aa)). The segment at 247–538 (DHRKIGRDLD…LIENHAGAMP (292 aa)) is catalytic. Positions 338, 389, and 515 each coordinate Zn(2+).

The protein belongs to the class-II aminoacyl-tRNA synthetase family. Homodimer. Requires Zn(2+) as cofactor.

It localises to the cytoplasm. The catalysed reaction is tRNA(Thr) + L-threonine + ATP = L-threonyl-tRNA(Thr) + AMP + diphosphate + H(+). Functionally, catalyzes the attachment of threonine to tRNA(Thr) in a two-step reaction: L-threonine is first activated by ATP to form Thr-AMP and then transferred to the acceptor end of tRNA(Thr). Also edits incorrectly charged L-seryl-tRNA(Thr). The polypeptide is Threonine--tRNA ligase (Bordetella petrii (strain ATCC BAA-461 / DSM 12804 / CCUG 43448)).